A 1065-amino-acid polypeptide reads, in one-letter code: Presequence protease, mitochondrial (1065 aa).

The transit peptide at M1–A42 directs the protein to the mitochondrion. H117 lines the Zn(2+) pocket. E120 serves as the catalytic Proton acceptor. H121 contacts Zn(2+). The active site involves E193. Zn(2+) is bound at residue E230.

This sequence belongs to the peptidase M16 family. PreP subfamily. As to quaternary structure, monomer and homodimer; homodimerization is induced by binding of the substrate. Zn(2+) serves as cofactor.

The protein resides in the mitochondrion intermembrane space. It localises to the mitochondrion matrix. Functionally, degrades mitochondrial transit peptides after their cleavage in the intermembrane space or in the matrix, and presequence peptides; clearance of these peptides is required to keep the presequence processing machinery running. Preferentially cleaves the N-terminal side of paired basic amino acid residues. Also degrades other unstructured peptides. May function as an ATP-dependent peptidase as opposed to a metalloendopeptidase. The protein is Presequence protease, mitochondrial (cym1) of Aspergillus fumigatus (strain ATCC MYA-4609 / CBS 101355 / FGSC A1100 / Af293) (Neosartorya fumigata).